The primary structure comprises 473 residues: DNA (cytosine-5)-methyltransferase DRM1A (473 aa).

In terms of domain architecture, UBA 1 spans 20–61 (SAPSALVAYFLGMGFSREMVFRAIKEIGDTDSEQILELLLTY). A compositionally biased stretch (acidic residues) spans 84 to 101 (EEEDEEEDVNWDEDDTVD). Residues 84–115 (EEEDEEEDVNWDEDDTVDNFDRATYSDGSGDE) form a disordered region. A UBA 2 domain is found at 120 to 140 (EMSEKDEKIKSLVSMGFPEDE). In terms of domain architecture, SAM-dependent MTase DRM-type spans 204–431 (VHRNLPDQAL…DSVKTIMASI (228 aa)).

The protein belongs to the class I-like SAM-binding methyltransferase superfamily. DRM-methyltransferase family.

The protein resides in the nucleus. The catalysed reaction is a 2'-deoxycytidine in DNA + S-adenosyl-L-methionine = a 5-methyl-2'-deoxycytidine in DNA + S-adenosyl-L-homocysteine + H(+). In terms of biological role, involved in de novo DNA methylation. Involved in RNA-directed DNA methylation (RdDM). In Oryza sativa subsp. japonica (Rice), this protein is DNA (cytosine-5)-methyltransferase DRM1A.